Consider the following 379-residue polypeptide: MTSETSVNLLDFDAEGLVAYCGSLGEKPFRAKQLQRWIHQYNAGDFDGMTDLAKSLREKLKGRATIGMPEIASDHVSADGTRKWLIDVGNGNAVETVFIPEETRGTLCVSSQAGCAVNCRFCSTGKQGFSRNLSTAEIIGQLRMAEFALRASLGRAPGPNGKAERVVTNVVMMGMGEPLLNYNAVVPAMRLMLDDNAYGLSRRRVTLSTSGVVPMMDRLGAELPVALAVSLHAPNDALRDELVPLNKKHPLRELMAACQRYLKVAPRDFITFEYCMLDGVNDTEAHARELLAVTRDVPCKFNLIPFNPFPESGLIRSKPEQIKRFAQVLIDAGVVTTVRKTRGDDIDAACGQLAGAVKDRTRLAERTGTAAKIIEVRAV.

The Proton acceptor role is filled by E95. The region spanning 101–345 is the Radical SAM core domain; the sequence is EETRGTLCVS…TTVRKTRGDD (245 aa). A disulfide bridge connects residues C108 and C350. 3 residues coordinate [4Fe-4S] cluster: C115, C119, and C122. S-adenosyl-L-methionine contacts are provided by residues 176 to 177, S208, 230 to 232, and N307; these read GE and SLH. The S-methylcysteine intermediate role is filled by C350.

It belongs to the radical SAM superfamily. RlmN family. The cofactor is [4Fe-4S] cluster.

It is found in the cytoplasm. The catalysed reaction is adenosine(2503) in 23S rRNA + 2 reduced [2Fe-2S]-[ferredoxin] + 2 S-adenosyl-L-methionine = 2-methyladenosine(2503) in 23S rRNA + 5'-deoxyadenosine + L-methionine + 2 oxidized [2Fe-2S]-[ferredoxin] + S-adenosyl-L-homocysteine. It carries out the reaction adenosine(37) in tRNA + 2 reduced [2Fe-2S]-[ferredoxin] + 2 S-adenosyl-L-methionine = 2-methyladenosine(37) in tRNA + 5'-deoxyadenosine + L-methionine + 2 oxidized [2Fe-2S]-[ferredoxin] + S-adenosyl-L-homocysteine. Specifically methylates position 2 of adenine 2503 in 23S rRNA and position 2 of adenine 37 in tRNAs. m2A2503 modification seems to play a crucial role in the proofreading step occurring at the peptidyl transferase center and thus would serve to optimize ribosomal fidelity. The chain is Dual-specificity RNA methyltransferase RlmN from Burkholderia vietnamiensis (strain G4 / LMG 22486) (Burkholderia cepacia (strain R1808)).